We begin with the raw amino-acid sequence, 236 residues long: Rho-related GTP-binding protein RhoV (236 aa).

The segment at 1 to 28 (MPPRELSEAEPPPLPASTPPPRRRSAPP) is disordered. The span at 10 to 20 (EPPPLPASTPP) shows a compositional bias: pro residues. S25 is modified (phosphoserine). Residues 38–45 (GDGAVGKS), 85–89 (DTAGQ), and 143–146 (TQAD) each bind GTP. Residue C234 is the site of S-palmitoyl cysteine attachment.

It belongs to the small GTPase superfamily. Rho family. As to quaternary structure, interacts with PAK2. It depends on Mg(2+) as a cofactor. In terms of tissue distribution, highly expressed in brain and testis and at lower levels in spleen and lung.

Its subcellular location is the cell membrane. It is found in the endosome membrane. Plays a role in the control of the actin cytoskeleton via activation of the JNK pathway. The sequence is that of Rho-related GTP-binding protein RhoV from Rattus norvegicus (Rat).